A 280-amino-acid chain; its full sequence is UDP-3-O-acyl-N-acetylglucosamine deacetylase (280 aa).

Residues histidine 77, histidine 238, and aspartate 242 each contribute to the Zn(2+) site. Histidine 265 functions as the Proton donor in the catalytic mechanism.

It belongs to the LpxC family. Zn(2+) is required as a cofactor.

The catalysed reaction is a UDP-3-O-[(3R)-3-hydroxyacyl]-N-acetyl-alpha-D-glucosamine + H2O = a UDP-3-O-[(3R)-3-hydroxyacyl]-alpha-D-glucosamine + acetate. It functions in the pathway glycolipid biosynthesis; lipid IV(A) biosynthesis; lipid IV(A) from (3R)-3-hydroxytetradecanoyl-[acyl-carrier-protein] and UDP-N-acetyl-alpha-D-glucosamine: step 2/6. In terms of biological role, catalyzes the hydrolysis of UDP-3-O-myristoyl-N-acetylglucosamine to form UDP-3-O-myristoylglucosamine and acetate, the committed step in lipid A biosynthesis. The polypeptide is UDP-3-O-acyl-N-acetylglucosamine deacetylase (Nostoc sp. (strain PCC 7120 / SAG 25.82 / UTEX 2576)).